The primary structure comprises 490 residues: AP-5 complex subunit mu-1 (490 aa).

The region spanning 206-476 (KPQVSISITE…LISSDYYIWN (271 aa)) is the MHD domain.

It belongs to the adaptor complexes medium subunit family. In terms of assembly, probably part of the adaptor protein complex 5 (AP-5) a tetramer composed of AP5B1, AP5M1, AP5S1 and AP5Z1. Expressed in various tumor cell lines including Jurkat, Hep-G2 and HeLa.

It is found in the cytoplasm. The protein resides in the cytosol. Its subcellular location is the late endosome membrane. The protein localises to the lysosome membrane. Functionally, as part of AP-5, a probable fifth adaptor protein complex it may be involved in endosomal transport. According to PubMed:18395520, it may play a role in cell death. This Homo sapiens (Human) protein is AP-5 complex subunit mu-1 (AP5M1).